Consider the following 581-residue polypeptide: MNIENYLSETLAKVFQKLGYAESFAKVVTSTREDVGHFQCNGAMPLAKFAKKPPLAIAEEIVEHIDAEDIFAKLEVAKPGFINITLAPKFLADTTNRFLNSNKFGVQNNLPNRKVVLDFGGPNVAKPMHVGHIRSALLGDALQRIHRFCGDTVVSDVHLGDWGTQMGMLIEEIKLQSPQLVYFDENYTGEYPTESPVTVQELAEIYPRASKRCKSDINEMEKARLATFELQQGRRGYVALWQHFVRISIDAVKKDFDSLDVHFDLWLGESDANKFIDEMISYFQANNFIYEDEGAWVIDTNKDGVPPLIVIKKDGGVMYGTTDLATLWQRSKDLDPDEIIYVVDKRQSLHFKQVFSVAERTKVVSEKCKLKHVAFGTVNGKDGRPFKTREGGVMHLADLISQAKEYAKNRMPDENDDSIIDQIAMATIKFGDLINNYANDYFFDLEKFAQHEGKTGPYLLYTAVRAKSILRKIFGDNYDIKSLAKDYKVVNAHNEYEEKLQLQLIQFPIAVQRAYENSQPHHICEYAYSLANSFNKFYVNCPITNLDDESLKKARIALCMATVKAMTIASDLIGISIPERM.

A 'HIGH' region motif is present at residues 122–132 (PNVAKPMHVGH).

Belongs to the class-I aminoacyl-tRNA synthetase family. In terms of assembly, monomer.

It is found in the cytoplasm. The enzyme catalyses tRNA(Arg) + L-arginine + ATP = L-arginyl-tRNA(Arg) + AMP + diphosphate. This Francisella tularensis subsp. novicida (strain U112) protein is Arginine--tRNA ligase.